Consider the following 510-residue polypeptide: NAD(P)H-quinone oxidoreductase subunit 2 A, chloroplastic (510 aa).

Helical transmembrane passes span 26–46 (LFDG…ILLL), 57–77 (IPWF…ALLF), 99–119 (IFQF…VEYI), 124–144 (MAIT…MFLC), 149–169 (LITI…LSGY), 183–203 (YLLM…WLYG), 227–247 (PGIS…LSPA), 295–315 (WHPL…LIAI), 323–342 (MLAY…IIVG), 354–374 (YMLF…LFGL), 395–415 (ALSL…AGFF), 418–438 (LHLF…IGLF), and 484–504 (MIVC…IIAI).

Belongs to the complex I subunit 2 family. NDH is composed of at least 16 different subunits, 5 of which are encoded in the nucleus.

It localises to the plastid. The protein resides in the chloroplast thylakoid membrane. It catalyses the reaction a plastoquinone + NADH + (n+1) H(+)(in) = a plastoquinol + NAD(+) + n H(+)(out). The catalysed reaction is a plastoquinone + NADPH + (n+1) H(+)(in) = a plastoquinol + NADP(+) + n H(+)(out). In terms of biological role, NDH shuttles electrons from NAD(P)H:plastoquinone, via FMN and iron-sulfur (Fe-S) centers, to quinones in the photosynthetic chain and possibly in a chloroplast respiratory chain. The immediate electron acceptor for the enzyme in this species is believed to be plastoquinone. Couples the redox reaction to proton translocation, and thus conserves the redox energy in a proton gradient. This is NAD(P)H-quinone oxidoreductase subunit 2 A, chloroplastic from Oenothera biennis (German evening primrose).